A 94-amino-acid chain; its full sequence is Small ribosomal subunit protein uS19 (94 aa).

Belongs to the universal ribosomal protein uS19 family.

In terms of biological role, protein S19 forms a complex with S13 that binds strongly to the 16S ribosomal RNA. The chain is Small ribosomal subunit protein uS19 from Moorella thermoacetica (strain ATCC 39073 / JCM 9320).